The primary structure comprises 322 residues: MDSVLSGKIVQILVGYLKENIYSEQMIKLRMKRICSYEEFLPTYSLIERITEESKEIAIKVYEKNIIVEIVKDFKNKDLIELFELKEELFDEALSYLKKYNADKFLESYTLYCFSEYSDPDSFIKENKSILTKLLRNQYEEVPEEYINELLKSKIKYSTKDLIILDWDNGIILDKNEDFWEEVDIIELACIRVLNLRVFDSMLSEAIQYFTRLQWEKLGYFKLKKLSKDLYLQRISYISYFDSIENVLMLYGDRYYAELYERLCKIFYVSEWIKRVEKKMEMISDIYTMTRQHLTEFYGLLLEGTIVALILLEIILALAKIV.

Residues 299–319 (GLLLEGTIVALILLEIILALA) traverse the membrane as a helical segment.

The protein localises to the membrane. This is an uncharacterized protein from Methanocaldococcus jannaschii (strain ATCC 43067 / DSM 2661 / JAL-1 / JCM 10045 / NBRC 100440) (Methanococcus jannaschii).